Here is a 130-residue protein sequence, read N- to C-terminus: Blasticidin-S deaminase (130 aa).

The region spanning 1–129 (MPLSQEESTL…ELLPSGYVWE (129 aa)) is the CMP/dCMP-type deaminase domain. Residue Ser-28 participates in substrate binding. Cys-54 contacts Zn(2+). Glu-56 acts as the Proton donor in catalysis. Arg-82 provides a ligand contact to substrate. Cys-88 and Cys-91 together coordinate Zn(2+). The substrate site is built by Tyr-126 and Trp-128.

This sequence belongs to the cytidine and deoxycytidylate deaminase family. As to quaternary structure, homotetramer. Requires Zn(2+) as cofactor.

The catalysed reaction is blasticidin S + H2O + H(+) = deaminohydroxyblasticidin S + NH4(+). In terms of biological role, catalyzes the deamination of the cytosine moiety of the antibiotics blasticidin S, cytomycin and acetylblasticidin S. This is Blasticidin-S deaminase (bsd) from Aspergillus terreus.